A 100-amino-acid chain; its full sequence is MGALTKAEIAERLYEELGLNKREAKELVELFFEEIRQALEQNEQVKLSGFGNFDLRDKRQRPGRNPKTGEEIPITARRVVTFRPGQKLKARVEAYAGTKS.

A disordered region spans residues 53-73 (FDLRDKRQRPGRNPKTGEEIP).

This sequence belongs to the bacterial histone-like protein family. As to quaternary structure, heterodimer of an alpha and a beta chain.

Functionally, this protein is one of the two subunits of integration host factor, a specific DNA-binding protein that functions in genetic recombination as well as in transcriptional and translational control. The chain is Integration host factor subunit alpha from Pseudomonas aeruginosa (strain LESB58).